A 311-amino-acid polypeptide reads, in one-letter code: 4-diphosphocytidyl-2-C-methyl-D-erythritol kinase (311 aa).

Lysine 13 is an active-site residue. Proline 114–alanine 124 is an ATP binding site. Aspartate 156 is a catalytic residue.

Belongs to the GHMP kinase family. IspE subfamily.

It catalyses the reaction 4-CDP-2-C-methyl-D-erythritol + ATP = 4-CDP-2-C-methyl-D-erythritol 2-phosphate + ADP + H(+). It participates in isoprenoid biosynthesis; isopentenyl diphosphate biosynthesis via DXP pathway; isopentenyl diphosphate from 1-deoxy-D-xylulose 5-phosphate: step 3/6. Catalyzes the phosphorylation of the position 2 hydroxy group of 4-diphosphocytidyl-2C-methyl-D-erythritol. The sequence is that of 4-diphosphocytidyl-2-C-methyl-D-erythritol kinase from Corynebacterium diphtheriae (strain ATCC 700971 / NCTC 13129 / Biotype gravis).